Consider the following 464-residue polypeptide: Chromosomal replication initiator protein DnaA (464 aa).

A domain I, interacts with DnaA modulators region spans residues 1-82 (MSLSLWQQCL…LLRFEVGSKP (82 aa)). The segment at 82–127 (PITQVISQTVTASVSSAPAAPAARTAAPSRPSWDNAAAQPELSYRS) is domain II. The span at 98–113 (APAAPAARTAAPSRPS) shows a compositional bias: low complexity. A disordered region spans residues 98–117 (APAAPAARTAAPSRPSWDNA). Residues 128–344 (NVNPKHTFDN…GALNRVIANA (217 aa)) are domain III, AAA+ region. ATP contacts are provided by Gly-172, Gly-174, Lys-175, and Thr-176. Residues 345 to 464 (NFTGRAITID…FSNLIRTLSS (120 aa)) form a domain IV, binds dsDNA region.

Belongs to the DnaA family. As to quaternary structure, oligomerizes as a right-handed, spiral filament on DNA at oriC.

Its subcellular location is the cytoplasm. In terms of biological role, plays an important role in the initiation and regulation of chromosomal replication. Binds to the origin of replication; it binds specifically double-stranded DNA at a 9 bp consensus (dnaA box): 5'-TTATC[CA]A[CA]A-3'. DnaA binds to ATP and to acidic phospholipids. DnaA can inhibit its own gene expression as well as that of other genes. Functionally, plays an essential role in the initiation and regulation of chromosomal replication. ATP-DnaA binds to the origin of replication (oriC) to initiate formation of the DNA replication initiation complex once per cell cycle. Binds the DnaA box (a 9 base pair repeat at the origin) and separates the double-stranded (ds)DNA. Forms a right-handed helical filament on oriC DNA; dsDNA binds to the exterior of the filament while single-stranded (ss)DNA is stabiized in the filament's interior. The ATP-DnaA-oriC complex binds and stabilizes one strand of the AT-rich DNA unwinding element (DUE), permitting loading of DNA polymerase. After initiation quickly degrades to an ADP-DnaA complex that is not apt for DNA replication. Binds acidic phospholipids. This Serratia marcescens protein is Chromosomal replication initiator protein DnaA.